The following is a 249-amino-acid chain: tRNA pseudouridine synthase A (249 aa).

Asp-53 (nucleophile) is an active-site residue. Tyr-111 contacts substrate.

It belongs to the tRNA pseudouridine synthase TruA family. In terms of assembly, homodimer.

The enzyme catalyses uridine(38/39/40) in tRNA = pseudouridine(38/39/40) in tRNA. Formation of pseudouridine at positions 38, 39 and 40 in the anticodon stem and loop of transfer RNAs. The polypeptide is tRNA pseudouridine synthase A (Streptococcus pneumoniae (strain 70585)).